We begin with the raw amino-acid sequence, 339 residues long: Phenylalanine--tRNA ligase alpha subunit (339 aa).

Position 254 (glutamate 254) interacts with Mg(2+).

The protein belongs to the class-II aminoacyl-tRNA synthetase family. Phe-tRNA synthetase alpha subunit type 1 subfamily. In terms of assembly, tetramer of two alpha and two beta subunits. It depends on Mg(2+) as a cofactor.

The protein resides in the cytoplasm. It catalyses the reaction tRNA(Phe) + L-phenylalanine + ATP = L-phenylalanyl-tRNA(Phe) + AMP + diphosphate + H(+). The sequence is that of Phenylalanine--tRNA ligase alpha subunit from Lachnoclostridium phytofermentans (strain ATCC 700394 / DSM 18823 / ISDg) (Clostridium phytofermentans).